We begin with the raw amino-acid sequence, 376 residues long: Chaperone protein DnaJ (376 aa).

Residues 5-69 (DYYEILGVDR…EKRARYDRFG (65 aa)) enclose the J domain. The CR-type zinc-finger motif lies at 135 to 217 (GLETDIRVPH…CNGKGVVRKT (83 aa)). Zn(2+) is bound by residues Cys148, Cys151, Cys165, Cys168, Cys191, Cys194, Cys205, and Cys208. CXXCXGXG motif repeat units follow at residues 148–155 (CPVCHGSR), 165–172 (CQTCGGSG), 191–198 (CPDCQGEG), and 205–212 (CSNCNGKG).

It belongs to the DnaJ family. As to quaternary structure, homodimer. Zn(2+) serves as cofactor.

It is found in the cytoplasm. Participates actively in the response to hyperosmotic and heat shock by preventing the aggregation of stress-denatured proteins and by disaggregating proteins, also in an autonomous, DnaK-independent fashion. Unfolded proteins bind initially to DnaJ; upon interaction with the DnaJ-bound protein, DnaK hydrolyzes its bound ATP, resulting in the formation of a stable complex. GrpE releases ADP from DnaK; ATP binding to DnaK triggers the release of the substrate protein, thus completing the reaction cycle. Several rounds of ATP-dependent interactions between DnaJ, DnaK and GrpE are required for fully efficient folding. Also involved, together with DnaK and GrpE, in the DNA replication of plasmids through activation of initiation proteins. The polypeptide is Chaperone protein DnaJ (Methanothermobacter thermautotrophicus (strain ATCC 29096 / DSM 1053 / JCM 10044 / NBRC 100330 / Delta H) (Methanobacterium thermoautotrophicum)).